Here is a 525-residue protein sequence, read N- to C-terminus: GMP synthase [glutamine-hydrolyzing] (525 aa).

The region spanning 9 to 207 (RILILDFGSQ…VRDICQCEAL (199 aa)) is the Glutamine amidotransferase type-1 domain. Residue cysteine 86 is the Nucleophile of the active site. Residues histidine 181 and glutamate 183 contribute to the active site. Residues 208–400 (WTPAKIIDDA…LGLPYDMLYR (193 aa)) enclose the GMPS ATP-PPase domain. An ATP-binding site is contributed by 235–241 (SGGVDSS).

In terms of assembly, homodimer.

The enzyme catalyses XMP + L-glutamine + ATP + H2O = GMP + L-glutamate + AMP + diphosphate + 2 H(+). It participates in purine metabolism; GMP biosynthesis; GMP from XMP (L-Gln route): step 1/1. Catalyzes the synthesis of GMP from XMP. The chain is GMP synthase [glutamine-hydrolyzing] from Shigella flexneri.